The following is a 337-amino-acid chain: Undecaprenyl-phosphate 4-deoxy-4-formamido-L-arabinose transferase (337 aa).

2 helical membrane passes run 235–255 (LSII…LLIV) and 270–290 (FVLF…MGLL).

Belongs to the glycosyltransferase 2 family.

It is found in the cell inner membrane. It catalyses the reaction UDP-4-deoxy-4-formamido-beta-L-arabinose + di-trans,octa-cis-undecaprenyl phosphate = 4-deoxy-4-formamido-alpha-L-arabinopyranosyl di-trans,octa-cis-undecaprenyl phosphate + UDP. It functions in the pathway glycolipid biosynthesis; 4-amino-4-deoxy-alpha-L-arabinose undecaprenyl phosphate biosynthesis; 4-amino-4-deoxy-alpha-L-arabinose undecaprenyl phosphate from UDP-4-deoxy-4-formamido-beta-L-arabinose and undecaprenyl phosphate: step 1/2. It participates in bacterial outer membrane biogenesis; lipopolysaccharide biosynthesis. Its function is as follows. Catalyzes the transfer of 4-deoxy-4-formamido-L-arabinose from UDP to undecaprenyl phosphate. The modified arabinose is attached to lipid A and is required for resistance to polymyxin and cationic antimicrobial peptides. The sequence is that of Undecaprenyl-phosphate 4-deoxy-4-formamido-L-arabinose transferase from Pseudomonas syringae pv. syringae (strain B728a).